The following is a 675-amino-acid chain: Methionine--tRNA ligase (675 aa).

Positions Pro15–His25 match the 'HIGH' region motif. Residues Cys146, Cys149, Cys159, and Cys162 each coordinate Zn(2+). The 'KMSKS' region signature appears at Lys332–Ser336. Lys335 is an ATP binding site. A tRNA-binding domain is found at Asp573–Lys675.

The protein belongs to the class-I aminoacyl-tRNA synthetase family. MetG type 1 subfamily. In terms of assembly, homodimer. The cofactor is Zn(2+).

The protein localises to the cytoplasm. It carries out the reaction tRNA(Met) + L-methionine + ATP = L-methionyl-tRNA(Met) + AMP + diphosphate. Is required not only for elongation of protein synthesis but also for the initiation of all mRNA translation through initiator tRNA(fMet) aminoacylation. This is Methionine--tRNA ligase from Yersinia pseudotuberculosis serotype O:1b (strain IP 31758).